We begin with the raw amino-acid sequence, 215 residues long: Cytochrome b6 (215 aa).

A helical membrane pass occupies residues 32–52 (IFYCFGGIVFTCFLVQVATGF). C35 serves as a coordination point for heme c. Heme b is bound by residues H86 and H100. 3 helical membrane passes run 90 to 110 (ASMM…TGGF), 116 to 136 (LTWV…VTGY), and 186 to 206 (AHTF…FLMI). The heme b site is built by H187 and H202.

The protein belongs to the cytochrome b family. PetB subfamily. In terms of assembly, the 4 large subunits of the cytochrome b6-f complex are cytochrome b6, subunit IV (17 kDa polypeptide, PetD), cytochrome f and the Rieske protein, while the 4 small subunits are PetG, PetL, PetM and PetN. The complex functions as a dimer. It depends on heme b as a cofactor. Heme c serves as cofactor.

The protein resides in the plastid. It is found in the chloroplast thylakoid membrane. Functionally, component of the cytochrome b6-f complex, which mediates electron transfer between photosystem II (PSII) and photosystem I (PSI), cyclic electron flow around PSI, and state transitions. The chain is Cytochrome b6 from Trieres chinensis (Marine centric diatom).